Here is a 63-residue protein sequence, read N- to C-terminus: Beta-defensin 35 (63 aa).

A signal peptide spans 1–23 (MPQTFFVFCFLFFVFLQLFPGTG). 3 disulfides stabilise this stretch: C31-C58, C38-C52, and C42-C59.

It belongs to the beta-defensin family. In terms of tissue distribution, expressed in testis, epididymis (caput, corpus and cauda), kidney and neonatal and adult brain.

The protein localises to the secreted. Has antibacterial activity. The chain is Beta-defensin 35 (Defb35) from Mus musculus (Mouse).